A 299-amino-acid chain; its full sequence is Bifunctional protein FolD (299 aa).

Residues 168-170 (GRS), Ser-193, and Ile-234 contribute to the NADP(+) site.

The protein belongs to the tetrahydrofolate dehydrogenase/cyclohydrolase family. Homodimer.

It carries out the reaction (6R)-5,10-methylene-5,6,7,8-tetrahydrofolate + NADP(+) = (6R)-5,10-methenyltetrahydrofolate + NADPH. The enzyme catalyses (6R)-5,10-methenyltetrahydrofolate + H2O = (6R)-10-formyltetrahydrofolate + H(+). Its pathway is one-carbon metabolism; tetrahydrofolate interconversion. Its function is as follows. Catalyzes the oxidation of 5,10-methylenetetrahydrofolate to 5,10-methenyltetrahydrofolate and then the hydrolysis of 5,10-methenyltetrahydrofolate to 10-formyltetrahydrofolate. This is Bifunctional protein FolD from Rhizobium johnstonii (strain DSM 114642 / LMG 32736 / 3841) (Rhizobium leguminosarum bv. viciae).